We begin with the raw amino-acid sequence, 190 residues long: Segregation and condensation protein B (190 aa).

It belongs to the ScpB family. Homodimer. Homodimerization may be required to stabilize the binding of ScpA to the Smc head domains. Component of a cohesin-like complex composed of ScpA, ScpB and the Smc homodimer, in which ScpA and ScpB bind to the head domain of Smc. The presence of the three proteins is required for the association of the complex with DNA.

Its subcellular location is the cytoplasm. Its function is as follows. Participates in chromosomal partition during cell division. May act via the formation of a condensin-like complex containing Smc and ScpA that pull DNA away from mid-cell into both cell halves. The protein is Segregation and condensation protein B of Bacillus mycoides (strain KBAB4) (Bacillus weihenstephanensis).